The primary structure comprises 153 residues: Antibacterial peptide PMAP-23 (153 aa).

The signal sequence occupies residues 1-29; that stretch reads METQRASLCLGRWSLWLLLLGLVVPSASA. Position 30 is a pyrrolidone carboxylic acid (glutamine 30). The propeptide occupies 30 to 130; the sequence is QALSYREAVL…DITCNQLQSV (101 aa). Residues 61-80 form a disordered region; that stretch reads DQPPKADEDPGTPKPVSFTV. Intrachain disulfides connect cysteine 85/cysteine 96 and cysteine 107/cysteine 124.

The protein belongs to the cathelicidin family.

It is found in the secreted. In terms of biological role, exerts antimicrobial activity against both Gram-positive and negative bacteria at concentrations of 2-16 micro molar. Its activity appears to be mediated by its ability to damage bacterial membranes. This Sus scrofa (Pig) protein is Antibacterial peptide PMAP-23 (PMAP23).